We begin with the raw amino-acid sequence, 284 residues long: Tropomyosin (284 aa).

The stretch at 1–284 forms a coiled coil; the sequence is MDAIKKKMQA…DMTFTELIGN (284 aa).

Belongs to the tropomyosin family. Homodimer.

In terms of biological role, tropomyosin, in association with the troponin complex, plays a central role in the calcium dependent regulation of muscle contraction. The chain is Tropomyosin from Periplaneta fuliginosa (Smokybrown cockroach).